The primary structure comprises 370 residues: Homospermidine synthase 2 (370 aa).

It belongs to the deoxyhypusine synthase family. Homotetramer. NAD(+) serves as cofactor. In terms of processing, the N-terminus is blocked. As to expression, expressed in roots.

The catalysed reaction is putrescine + spermidine = sym-homospermidine + propane-1,3-diamine. It functions in the pathway alkaloid biosynthesis; pyrrolizidine alkaloid biosynthesis. In terms of biological role, catalyzes the transfer of an aminobutyl unit from spermidine onto putrescine. The resulting polyamine homospermidine is a precursor in the biosynthesis of pyrrolizidine alkaloids. In Senecio vernalis (Spring groundsel), this protein is Homospermidine synthase 2.